A 152-amino-acid polypeptide reads, in one-letter code: uncharacterized protein (152 aa).

It belongs to the IIV-6 145L family.

This is an uncharacterized protein from Invertebrate iridescent virus 3 (IIV-3).